We begin with the raw amino-acid sequence, 133 residues long: S-adenosylmethionine decarboxylase proenzyme (133 aa).

The active-site Schiff-base intermediate with substrate; via pyruvic acid is the Ser-65. Residue Ser-65 is modified to Pyruvic acid (Ser); by autocatalysis. The Proton acceptor; for processing activity role is filled by His-70. Catalysis depends on Cys-85, which acts as the Proton donor; for catalytic activity.

Belongs to the prokaryotic AdoMetDC family. Type 1 subfamily. In terms of assembly, heterotetramer of two alpha and two beta chains arranged as a dimer of alpha/beta heterodimers. It depends on pyruvate as a cofactor. Is synthesized initially as an inactive proenzyme. Formation of the active enzyme involves a self-maturation process in which the active site pyruvoyl group is generated from an internal serine residue via an autocatalytic post-translational modification. Two non-identical subunits are generated from the proenzyme in this reaction, and the pyruvate is formed at the N-terminus of the alpha chain, which is derived from the carboxyl end of the proenzyme. The post-translation cleavage follows an unusual pathway, termed non-hydrolytic serinolysis, in which the side chain hydroxyl group of the serine supplies its oxygen atom to form the C-terminus of the beta chain, while the remainder of the serine residue undergoes an oxidative deamination to produce ammonia and the pyruvoyl group blocking the N-terminus of the alpha chain.

The catalysed reaction is S-adenosyl-L-methionine + H(+) = S-adenosyl 3-(methylsulfanyl)propylamine + CO2. Its pathway is amine and polyamine biosynthesis; S-adenosylmethioninamine biosynthesis; S-adenosylmethioninamine from S-adenosyl-L-methionine: step 1/1. Functionally, catalyzes the decarboxylation of S-adenosylmethionine to S-adenosylmethioninamine (dcAdoMet), the propylamine donor required for the synthesis of the polyamines spermine and spermidine from the diamine putrescine. This is S-adenosylmethionine decarboxylase proenzyme from Brevibacillus brevis (strain 47 / JCM 6285 / NBRC 100599).